Consider the following 62-residue polypeptide: Conotoxin Im5.1 (62 aa).

Residues 1-19 (MYCLPVFIILLLLISSAPS) form the signal peptide. The propeptide occupies 20–48 (TPPQPRNKDRVHLISLLDNHKQILQRDWN). A Tryptophan amide modification is found at Trp-60.

This sequence belongs to the conotoxin T superfamily. In terms of processing, contains 2 disulfide bonds that can be either 'C1-C3, C2-C4' or 'C1-C4, C2-C3', since these disulfide connectivities have been observed for conotoxins with cysteine framework V (for examples, see AC P0DQQ7 and AC P81755). Expressed by the venom duct.

Its subcellular location is the secreted. This chain is Conotoxin Im5.1, found in Conus imperialis (Imperial cone).